We begin with the raw amino-acid sequence, 111 residues long: Cytochrome c oxidase subunit 7A2-like, mitochondrial (111 aa).

Residues 1–54 (MYYKFSSFTQKLAGAWASEAYTPQGLKPVSTEAPPIIFATPTKLTSSVTAYDYS) constitute a mitochondrion transit peptide. K68 bears the N6-acetyllysine mark. The helical transmembrane segment at 79 to 104 (PDQMLYRTTMALTLGGTIYCLIALYM) threads the bilayer.

Belongs to the cytochrome c oxidase VIIa family.

It localises to the mitochondrion inner membrane. Functionally, non-functional protein. In contrast to the protein found in other strains (AC Q99KD6), cannot induce the assembly of mitochondrial respiratory supercomplexes. The protein is Cytochrome c oxidase subunit 7A2-like, mitochondrial of Mus musculus (Mouse).